The sequence spans 382 residues: MAQQETAGGVLLIAASILALIFANSYLSGFYNGVLNLPLVVAIGAFEISKPLLLWVNDGLMALFFLMVGLEVKREVLEGHLSQPSQVVLPGLAALAGVAFPAIIYASFNWQDPTALRGWAIPSATDIAFALGVFSLFGRHLPVSLKLFLLSVAIFDDIAAIVIIALFYSHELSTLSLLVAGIGIVMLFVLNRLKIRHVSPFMFVGLVVWAAVLKSGVHATLAGFVIAWFIPLKHKNIHDEPMLLSLEHALQPWVAYFILPFFAFVNAGVHLGGIGLDTLTAPVTLGIIVGLFVGKQLGIFSVCWLSIKLRIAKLPEGATWRELYGVCLLAGIGFTMSLFIGSLAFEGANSEMVASVKLGVLFGSLLSAICGALILTNSRKIK.

12 consecutive transmembrane segments (helical) span residues 7-27, 28-48, 52-72, 88-108, 118-138, 147-167, 170-190, 206-226, 254-274, 285-305, 325-345, and 356-376; these read AGGVLLIAASILALIFANSYL, SGFYNGVLNLPLVVAIGAFEI, LLLWVNDGLMALFFLMVGLEV, VLPGLAALAGVAFPAIIYASF, GWAIPSATDIAFALGVFSLFG, LFLLSVAIFDDIAAIVIIALF, HELSTLSLLVAGIGIVMLFVL, LVVWAAVLKSGVHATLAGFVI, VAYFILPFFAFVNAGVHLGGI, LGIIVGLFVGKQLGIFSVCWL, GVCLLAGIGFTMSLFIGSLAF, and VKLGVLFGSLLSAICGALILT.

The protein belongs to the NhaA Na(+)/H(+) (TC 2.A.33) antiporter family.

Its subcellular location is the cell inner membrane. The enzyme catalyses Na(+)(in) + 2 H(+)(out) = Na(+)(out) + 2 H(+)(in). Functionally, na(+)/H(+) antiporter that extrudes sodium in exchange for external protons. The polypeptide is Na(+)/H(+) antiporter NhaA 2 (Saccharophagus degradans (strain 2-40 / ATCC 43961 / DSM 17024)).